The chain runs to 72 residues: Thiostrepton (72 aa).

A propeptide spanning residues 1–55 is cleaved from the precursor; that stretch reads MDATAIHERWSVMSNASIGQEIGVEGLTGLDVDALEISDYVDETLLDGEDLTVTM. Residues 56 to 67 constitute a cross-link (4-(1-hydroxyethyl)-7-isoleucino-2-(threonin-O3-ylcarbonyl)-7,8-dihydroquinolin-8-ol (Ile-Thr)); the sequence is IASASCTTCICT. Residue Ser58 is modified to 2,3-didehydroalanine (Ser). A cross-link (thiazole-4-carboxylic acid (Ser-Cys)) is located at residues 60 to 61; sequence SC. The segment at residues 60–68 is a cross-link (5-amino-piperideine-2,5-dicarboxylic acid (Ser-Cys) (with S-69)); sequence SCTTCICTC. The 5-amino-piperideine-2,5-dicarboxylic acid (Ser-Ser) (with C-68) cross-link spans 60 to 69; that stretch reads SCTTCICTCS. Thr63 is subject to (Z)-2,3-didehydrobutyrine. The (4S)-thiazoline-4-carboxylic acid (Thr-Cys) cross-link spans 63–64; that stretch reads TC. Ile65 carries the post-translational modification (3S,4R)-3,4-dihydroxyisoleucine. The segment at residues 65–66 is a cross-link (thiazole-4-carboxylic acid (Ile-Cys)); sequence IC. Positions 67–68 form a cross-link, thiazole-4-carboxylic acid (Thr-Cys); the sequence is TC. The segment at residues 69-70 is a cross-link (thiazole-4-carboxylic acid (Ser-Cys)); that stretch reads SC. 2,3-didehydroalanine (Ser) occurs at positions 71 and 72. Ser72 carries the serine amide modification.

It belongs to the thiocillin family. In terms of processing, maturation of thiazole and oxazole containing antibiotics involves the enzymatic condensation of a Cys, Ser or Thr with the alpha-carbonyl of the preceding amino acid to form a thioether or ether bond, then dehydration to form a double bond with the alpha-amino nitrogen. Thiazoline or oxazoline ring are dehydrogenated to form thiazole or oxazole rings. Post-translationally, maturation of pyridinyl containing antibiotics involves the cross-linking of a Ser and a Cys-Ser pair usually separated by 7 or 8 residues along the peptide chain. The Ser residues are dehydrated to didehydroalanines, then bonded between their beta carbons. The alpha carbonyl of the Cys condenses with alpha carbon of the first Ser to form a pyridinyl ring. The ring may be multiply dehydrogenated to form a pyridine ring with loss of the amino nitrogen of the first Ser. The amidation of Ser-72 probably does not occur by the same mechanism, oxidative cleavage of glycine, as in eukaryotes. In terms of processing, the structure of the 2,3-didehydrobutyrin is shown to be Z-isomer.

The protein resides in the secreted. Its function is as follows. Has bacteriocidal activity. Inhibits bacterial protein biosynthesis by acting on the elongation factor Tu (EF-Tu). This is Thiostrepton (tpdA) from Streptomyces azureus.